We begin with the raw amino-acid sequence, 238 residues long: uncharacterized protein (238 aa).

The segment covering 1–10 has biased composition (basic residues); that stretch reads MARGQNIRKR. Disordered regions lie at residues 1–26 and 195–238; these read MARG…IGIH and LNTS…YDSF.

The protein belongs to the asfivirus DP238L family.

This is an uncharacterized protein from Ornithodoros (relapsing fever ticks).